A 507-amino-acid polypeptide reads, in one-letter code: Aldehyde dehydrogenase 1, mitochondrial (507 aa).

A mitochondrion-targeting transit peptide spans 1–21; the sequence is MLATRNLVPIIRASIKWRIKL. 266-271 provides a ligand contact to NAD(+); it reads GSTLVG. Catalysis depends on residues glutamate 289 and cysteine 323.

This sequence belongs to the aldehyde dehydrogenase family. In terms of assembly, homotetramer.

It localises to the mitochondrion matrix. It carries out the reaction an aldehyde + NAD(+) + H2O = a carboxylate + NADH + 2 H(+). Its pathway is alcohol metabolism; ethanol degradation; acetate from ethanol: step 2/2. The protein is Aldehyde dehydrogenase 1, mitochondrial (ALD1) of Saccharomyces cerevisiae (Baker's yeast).